A 344-amino-acid chain; its full sequence is Dihydroorotate dehydrogenase (quinone) (344 aa).

FMN-binding positions include 65-69 and threonine 89; that span reads AGLDK. Residue lysine 69 participates in substrate binding. A substrate-binding site is contributed by 114–118; it reads NRMGF. Residues asparagine 145 and asparagine 178 each contribute to the FMN site. Asparagine 178 contacts substrate. Serine 181 acts as the Nucleophile in catalysis. Asparagine 183 contributes to the substrate binding site. Lysine 223 and threonine 251 together coordinate FMN. 252-253 contributes to the substrate binding site; that stretch reads NT. Residues glycine 274, glycine 303, and 324–325 contribute to the FMN site; that span reads YT.

Belongs to the dihydroorotate dehydrogenase family. Type 2 subfamily. In terms of assembly, monomer. Requires FMN as cofactor.

The protein resides in the cell membrane. The catalysed reaction is (S)-dihydroorotate + a quinone = orotate + a quinol. It functions in the pathway pyrimidine metabolism; UMP biosynthesis via de novo pathway; orotate from (S)-dihydroorotate (quinone route): step 1/1. In terms of biological role, catalyzes the conversion of dihydroorotate to orotate with quinone as electron acceptor. The polypeptide is Dihydroorotate dehydrogenase (quinone) (Ralstonia nicotianae (strain ATCC BAA-1114 / GMI1000) (Ralstonia solanacearum)).